We begin with the raw amino-acid sequence, 854 residues long: Discoidin domain-containing receptor 2 (854 aa).

The N-terminal stretch at 1-21 is a signal peptide; the sequence is MIPIPRMPLVLLLLLLILGSA. Residues 22-399 are Extracellular-facing; the sequence is KAQVNPAICR…MLKVDDSNTR (378 aa). The F5/8 type C domain maps to 30–185; the sequence is CRYPLGMSGG…VCMRVELYGC (156 aa). 2 disulfides stabilise this stretch: Cys-30/Cys-185 and Cys-73/Cys-177. 5 N-linked (GlcNAc...) asparagine glycosylation sites follow: Asn-121, Asn-213, Asn-261, Asn-280, and Asn-372. The chain crosses the membrane as a helical span at residues 400–421; it reads ILIGCLVAIIFILLAIIVIILW. The Cytoplasmic portion of the chain corresponds to 422-854; it reads RQFWQKMLEK…HLLLLQQGAE (433 aa). Positions 452 to 471 are disordered; the sequence is SMFNNNRSSSPSEQESNSTY. Positions 455-469 are enriched in low complexity; sequence NNNRSSSPSEQESNS. Residue Tyr-471 is modified to Phosphotyrosine; by SRC and autocatalysis. One can recognise a Protein kinase domain in the interval 563–848; that stretch reads LAFKEKLGEG…PSFQEIHLLL (286 aa). Residues 569-577 and Lys-608 each bind ATP; that span reads LGEGQFGEV. Asp-709 (proton acceptor) is an active-site residue. Residues Tyr-735, Tyr-739, and Tyr-740 each carry the phosphotyrosine; by SRC and autocatalysis modification.

The protein belongs to the protein kinase superfamily. Tyr protein kinase family. Insulin receptor subfamily. In terms of assembly, binds hydroxyproline-rich sequence motifs in fibrillar, glycosylated collagen, such as the GQOGVMGFO motif, where O stands for hydroxyproline. Interacts with SRC. Interacts (tyrosine phosphorylated) with SHC1. Post-translationally, N-glycosylated. In terms of processing, tyrosine phosphorylated in response to collagen binding. Phosphorylated by SRC; this is required for activation and subsequent autophosphorylation on additional tyrosine residues. In terms of tissue distribution, widely expressed. Detected in lung, ovary, skin and in testis Leydig cells (at protein level). Widely expressed. Detected at high levels in heart, lung, skeletal muscle, central nervous system (CNS) and kidney, and at lower levels in brain and testis. Detected in chondrocytes in tibia growth plates of young mice.

It localises to the cell membrane. It catalyses the reaction L-tyrosyl-[protein] + ATP = O-phospho-L-tyrosyl-[protein] + ADP + H(+). Its activity is regulated as follows. Present in an inactive state in the absence of collagen binding and phosphorylation by SRC. Tyrosine phosphorylation enhances the affinity for ATP and the catalytic activity. In terms of biological role, tyrosine kinase that functions as a cell surface receptor for fibrillar collagen and regulates cell differentiation, remodeling of the extracellular matrix, cell migration and cell proliferation. Required for normal bone development. Regulates osteoblast differentiation and chondrocyte maturation via a signaling pathway that involves MAP kinases and leads to the activation of the transcription factor RUNX2. Regulates remodeling of the extracellular matrix by up-regulation of the collagenases MMP1, MMP2 and MMP13, and thereby facilitates cell migration and tumor cell invasion. Promotes fibroblast migration and proliferation, and thereby contributes to cutaneous wound healing. The protein is Discoidin domain-containing receptor 2 (Ddr2) of Mus musculus (Mouse).